The following is a 281-amino-acid chain: Nucleotide-binding protein TRQ2_1124 (281 aa).

9-16 contacts ATP; that stretch reads GLSGAGKT. 58 to 61 provides a ligand contact to GTP; it reads DVRS.

The protein belongs to the RapZ-like family.

Its function is as follows. Displays ATPase and GTPase activities. The protein is Nucleotide-binding protein TRQ2_1124 of Thermotoga sp. (strain RQ2).